The chain runs to 296 residues: 4-diphosphocytidyl-2-C-methyl-D-erythritol kinase (296 aa).

Residue Lys12 is part of the active site. ATP is bound at residue 94-104 (PAQAGMGGGSS). Asp136 is an active-site residue.

This sequence belongs to the GHMP kinase family. IspE subfamily.

It carries out the reaction 4-CDP-2-C-methyl-D-erythritol + ATP = 4-CDP-2-C-methyl-D-erythritol 2-phosphate + ADP + H(+). It participates in isoprenoid biosynthesis; isopentenyl diphosphate biosynthesis via DXP pathway; isopentenyl diphosphate from 1-deoxy-D-xylulose 5-phosphate: step 3/6. Its function is as follows. Catalyzes the phosphorylation of the position 2 hydroxy group of 4-diphosphocytidyl-2C-methyl-D-erythritol. This Variovorax paradoxus (strain S110) protein is 4-diphosphocytidyl-2-C-methyl-D-erythritol kinase.